The following is a 696-amino-acid chain: Transcriptional regulatory protein pro1 (696 aa).

The segment at 1 to 48 (MSTQSPNHHEDITKTSSVNMTTTTTTTKTKAAAKAGTNAAPKQKTQMH) is disordered. Over residues 21-40 (TTTTTTTKTKAAAKAGTNAA) the composition is skewed to low complexity. The segment at residues 55–82 (CYTCRLRRKKCDEGSPMCTACKHLGLCC) is a DNA-binding region (zn(2)-C6 fungal-type). Positions 112–145 (LSEKSSHTIQTSINTPPGLSHSLPTSATFSDPLD) are disordered. Positions 118 to 140 (HTIQTSINTPPGLSHSLPTSATF) are enriched in polar residues.

The protein resides in the nucleus. Its function is as follows. May be involved in fruiting body development. The sequence is that of Transcriptional regulatory protein pro1 (adv-1) from Neurospora crassa (strain ATCC 24698 / 74-OR23-1A / CBS 708.71 / DSM 1257 / FGSC 987).